Consider the following 681-residue polypeptide: PAB-dependent poly(A)-specific ribonuclease subunit pan3-like (681 aa).

The segment at 9–38 (FSTNIPCRNEQLYGRCPYIDKGCFFQHKNQ) adopts a C3H1-type zinc-finger fold. Disordered stretches follow at residues 38-58 (QDNAPASSKPPSATAIDPQNS) and 82-123 (SSAS…TVSL). Positions 41–50 (APASSKPPSA) are enriched in low complexity. Over residues 96–106 (KSYSSALSSGK) the composition is skewed to polar residues. At Ser-165 the chain carries Phosphoserine.

Belongs to the protein kinase superfamily. PAN3 family.

The protein localises to the cytoplasm. In terms of biological role, regulatory subunit of the poly(A)-nuclease (PAN) deadenylation complex. This chain is PAB-dependent poly(A)-specific ribonuclease subunit pan3-like, found in Schizosaccharomyces pombe (strain 972 / ATCC 24843) (Fission yeast).